The primary structure comprises 92 residues: Small ribosomal subunit protein uS19 (92 aa).

Belongs to the universal ribosomal protein uS19 family.

Its function is as follows. Protein S19 forms a complex with S13 that binds strongly to the 16S ribosomal RNA. The sequence is that of Small ribosomal subunit protein uS19 from Bacillus cereus (strain B4264).